The following is a 346-amino-acid chain: Inositol 2-dehydrogenase/D-chiro-inositol 3-dehydrogenase (346 aa).

The span at 322–331 (GREESIELPK) shows a compositional bias: basic and acidic residues. Positions 322-346 (GREESIELPKKPAFYQHSAATPEQV) are disordered.

Belongs to the Gfo/Idh/MocA family. As to quaternary structure, homotetramer.

It catalyses the reaction myo-inositol + NAD(+) = scyllo-inosose + NADH + H(+). The catalysed reaction is 1D-chiro-inositol + NAD(+) = scyllo-inosine + NADH + H(+). It functions in the pathway polyol metabolism; myo-inositol degradation into acetyl-CoA; acetyl-CoA from myo-inositol: step 1/7. Its function is as follows. Involved in the oxidation of myo-inositol (MI) and D-chiro-inositol (DCI) to 2-keto-myo-inositol (2KMI or 2-inosose) and 1-keto-D-chiro-inositol (1KDCI), respectively. This chain is Inositol 2-dehydrogenase/D-chiro-inositol 3-dehydrogenase, found in Shouchella clausii (strain KSM-K16) (Alkalihalobacillus clausii).